The sequence spans 143 residues: Small ribosomal subunit protein uS12 (143 aa).

Pro62 is modified (hydroxyproline).

This sequence belongs to the universal ribosomal protein uS12 family.

The chain is Small ribosomal subunit protein uS12 (rps23) from Dictyostelium discoideum (Social amoeba).